A 325-amino-acid chain; its full sequence is Tagatose 1,6-diphosphate aldolase 1 (325 aa).

The protein belongs to the aldolase LacD family.

The catalysed reaction is D-tagatofuranose 1,6-bisphosphate = D-glyceraldehyde 3-phosphate + dihydroxyacetone phosphate. It functions in the pathway carbohydrate metabolism; D-tagatose 6-phosphate degradation; D-glyceraldehyde 3-phosphate and glycerone phosphate from D-tagatose 6-phosphate: step 2/2. The polypeptide is Tagatose 1,6-diphosphate aldolase 1 (lacD1) (Streptococcus pyogenes serotype M3 (strain ATCC BAA-595 / MGAS315)).